A 515-amino-acid polypeptide reads, in one-letter code: Protein FAM98A (515 aa).

Disordered regions lie at residues 297–411 (VLMG…YHGG) and 432–515 (SGYQ…HYTS). A compositionally biased stretch (basic and acidic residues) spans 302–311 (VPDRGGRPNE). Gly residues predominate over residues 382–395 (WTDGGSASGGGYQD). Positions 444–456 (RYQDGGHHGERGS) are enriched in basic and acidic residues. The span at 457-481 (GRGGRGGRGGRGGRGSQGGGWGGRG) shows a compositional bias: gly residues. The segment covering 485–501 (YHQGGQFEQHFQHGGYQ) has biased composition (low complexity). Polar residues predominate over residues 502–515 (YSHSGFGQGRHYTS).

The protein belongs to the FAM98 family. As to quaternary structure, interacts (via N- and C-terminus) with DDX1. Interacts (via N- and C-terminus) with C14orf166. Interacts with FAM98B. Interacts with PLEKHM1 (via N- and C-terminus).

Functionally, positively stimulates PRMT1-induced protein arginine methylation. Involved in skeletal homeostasis. Positively regulates lysosome peripheral distribution and ruffled border formation in osteoclasts. This is Protein FAM98A from Rattus norvegicus (Rat).